The primary structure comprises 490 residues: Cobyric acid synthase (490 aa).

A GATase cobBQ-type domain is found at 252 to 439 (RLKVVVPVLP…LHGLFESTAA (188 aa)). The active-site Nucleophile is the Cys333. Residue His431 is part of the active site.

This sequence belongs to the CobB/CobQ family. CobQ subfamily.

It participates in cofactor biosynthesis; adenosylcobalamin biosynthesis. Its function is as follows. Catalyzes amidations at positions B, D, E, and G on adenosylcobyrinic A,C-diamide. NH(2) groups are provided by glutamine, and one molecule of ATP is hydrogenolyzed for each amidation. In Pseudomonas aeruginosa (strain ATCC 15692 / DSM 22644 / CIP 104116 / JCM 14847 / LMG 12228 / 1C / PRS 101 / PAO1), this protein is Cobyric acid synthase.